The following is a 434-amino-acid chain: Tryptamine hydroxycinnamoyltransferase 2 (434 aa).

Active-site proton acceptor residues include H154 and D380.

It belongs to the plant acyltransferase family.

Functionally, hydroxycinnamoyl transferase that catalyzes the transfer of an acyl from p-coumaryol-CoA to tryptamine, to produce coumaroyl tryptamine. Serotonin and tyramine serve as acyl acceptors in vitro. Can use caffeoyl-CoA, and to a lesser extent feruloyl-CoA, as acyl donors. The sequence is that of Tryptamine hydroxycinnamoyltransferase 2 from Oryza sativa subsp. japonica (Rice).